The following is a 169-amino-acid chain: MAQGDDSKQAIAQIIRQEQALIFPSFDENEAFALGHRIRDIAVKEKLGIATEISLWDRQLFYATTAGSTVDNQEWLRRKFNVVRRFHASTYRLVLEQNRDDRMFALHKALNVEDYALAGGGFPIRVAGAGVIGAVIVSGLPQREDHNLVIRAVAEHLGQDPVALALPAV.

The protein belongs to the UPF0303 family.

In Brucella anthropi (strain ATCC 49188 / DSM 6882 / CCUG 24695 / JCM 21032 / LMG 3331 / NBRC 15819 / NCTC 12168 / Alc 37) (Ochrobactrum anthropi), this protein is UPF0303 protein Oant_1766.